The primary structure comprises 457 residues: MKSTVEQLSPTRVRINVEVPFAELKSDFDKAYKALAQQIRLPGFRPGKAPARLLEARVGRGAVLEQVVNDALPSRYSEAVTSAGVKAIGQPEIEVTKIEDGELLEFTAEVDVRPEIELPDFSSINVEVDPIEITDEAIEEQLLSLRQRFGTLTGVDRAVEDGDFVSIDLSATVDGENVAEATASGLSHEVGSGQLIEGLDEAIIGLKAGESKDFTSTLVAGEYAGKEAVVTVTVQTVKERELPAEDDEFAQLASEFDTLEELKADLRERVARVRKVEQAGQIRDKVLEQLLETVEVPLPEAVVKAEVDAALHDAVHGLDHDEEALNKLLEEQGSSREEFDKDAQEAAERSVKTQLLLDSIADAGNVTVGQDELTERILFQAQRYGMAPEQFIQQIQQANQLGAVFADVRRGKALASVVESAGVKDTSGAVVDTAELFGSSEDETEADASDSAESEDK.

The region spanning 162-243 is the PPIase FKBP-type domain; it reads GDFVSIDLSA…VQTVKERELP (82 aa). The disordered stretch occupies residues 434–457; sequence AELFGSSEDETEADASDSAESEDK. Residues 440–457 are compositionally biased toward acidic residues; it reads SEDETEADASDSAESEDK.

The protein belongs to the FKBP-type PPIase family. Tig subfamily.

Its subcellular location is the cytoplasm. It carries out the reaction [protein]-peptidylproline (omega=180) = [protein]-peptidylproline (omega=0). In terms of biological role, involved in protein export. Acts as a chaperone by maintaining the newly synthesized protein in an open conformation. Functions as a peptidyl-prolyl cis-trans isomerase. The protein is Trigger factor of Rhodococcus erythropolis (strain PR4 / NBRC 100887).